The primary structure comprises 1380 residues: DNA-directed RNA polymerase subunit beta (1380 aa).

Belongs to the RNA polymerase beta chain family. In terms of assembly, the RNAP catalytic core consists of 2 alpha, 1 beta, 1 beta' and 1 omega subunit. When a sigma factor is associated with the core the holoenzyme is formed, which can initiate transcription.

It carries out the reaction RNA(n) + a ribonucleoside 5'-triphosphate = RNA(n+1) + diphosphate. Its function is as follows. DNA-dependent RNA polymerase catalyzes the transcription of DNA into RNA using the four ribonucleoside triphosphates as substrates. The chain is DNA-directed RNA polymerase subunit beta from Ehrlichia ruminantium (strain Welgevonden).